The sequence spans 635 residues: Ankyrin repeat and SOCS box protein 2 (635 aa).

Positions 8-16 (RGSQCTIGQ) are required for FLNA degradation. The UIM domain maps to 26–45 (SEDELVQMAIEQSLADKTRG). ANK repeat units lie at residues 104–133 (APAD…NLAE), 137–167 (EGWL…TIDQ), 171–200 (QEET…EPDI), 204–233 (SRET…DTNH), 237–266 (RGWT…KVES), 270–299 (YGIT…DINT), 303–332 (DNAS…DANK), 336–365 (DGLL…RTRI), 368–397 (SGVS…DVNT), 410–439 (RRSS…DPNR), 440–469 (DVIS…NIDA), and 476–504 (TAFP…DGEP). At Ser-371 the chain carries Phosphoserine; by MAPK. Residues 586–635 (IKEKAEPPRPLAHLCRLRVRKAIGKYRIKLLDTLPLPGRLIRYLKYENTQ) enclose the SOCS box domain.

Belongs to the ankyrin SOCS box (ASB) family. As to quaternary structure, component of a probable ECS E3 ubiquitin-protein ligase complex which contains CUL5, either RBX1 or RNF7/RBX2, Elongin BC complex (ELOB and ELOC) and ASB2. Interacts with SKP2. Through its interaction with SKP2, likely to bridge the formation of dimeric E3-ubiquitin-protein ligase complexes composed of an ECS complex and an SCF(SKP2) complex. Interacts with JAK2; the interaction targets JAK2 for Notch-mediated proteasomal degradation. Interacts with TCF3/E2A; the interaction is mediated by SKP2 and targets TCF3 for Notch-mediated proteasomal degradation. Interacts with DES. Post-translationally, monoubiquitinated. In terms of processing, not monoubiquitinated. Phosphorylation at Ser-371 is required for association with FLNA and subsequent FLNA degradation. In terms of tissue distribution, expressed in muscle cells. As to expression, expressed in hematopoietic cells.

It localises to the cytoplasm. The protein resides in the cytoskeleton. It is found in the stress fiber. The protein localises to the myofibril. Its subcellular location is the sarcomere. It localises to the z line. It participates in protein modification; protein ubiquitination. Substrate-recognition component of a SCF-like ECS (Elongin-Cullin-SOCS-box protein) E3 ubiquitin-protein ligase complex which mediates the ubiquitination and subsequent proteasomal degradation of target proteins. Mediates Notch-induced ubiquitination and degradation of substrates including TCF3/E2A and JAK2. Required during embryonic heart development for complete heart looping. Required for cardiomyocyte differentiation. Specifically promotes the ubiquitination of SMAD9 and targets it for proteasomal degradation, leading to avoid excessive accumulation of SMAD9. Plays a role in the regulation of NK-cell migration by modulating protein levels of filamin A/FLNA via regulation of its ubiquitination and proteasome degradation. Its function is as follows. Involved in myogenic differentiation and targets filamin FLNB for proteasomal degradation but not filamin FLNA. Also targets DES for proteasomal degradation. Acts as a negative regulator of skeletal muscle mass. In terms of biological role, targets filamins FLNA and FLNB for proteasomal degradation. This leads to enhanced adhesion of hematopoietic cells to fibronectin. Required for FLNA degradation in immature cardiomyocytes which is necessary for actin cytoskeleton remodeling, leading to proper organization of myofibrils and function of mature cardiomyocytes. Required for degradation of FLNA and FLNB in immature dendritic cells (DC) which enhances immature DC migration by promoting DC podosome formation and DC-mediated degradation of the extracellular matrix. Does not promote proteasomal degradation of tyrosine-protein kinases JAK1 or JAK2 in hematopoietic cells. This is Ankyrin repeat and SOCS box protein 2 (ASB2) from Homo sapiens (Human).